Reading from the N-terminus, the 610-residue chain is Anthocyanin regulatory Lc protein (610 aa).

Disordered regions lie at residues 402 to 422 (ATGA…MSER) and 468 to 524 (LESS…PVLT). The region spanning 412-461 (TGTKNHVMSERKRREKLNEMFLVLKSLLPSIHRVNKASILAETIAYLKEL) is the bHLH domain. The span at 481–495 (TTTRLITRPSRGNNE) shows a compositional bias: polar residues. The span at 508–519 (KSPELGRDDVER) shows a compositional bias: basic and acidic residues.

The protein belongs to the bHLH protein family. Efficient DNA binding requires dimerization with another bHLH protein.

The protein resides in the nucleus. Functionally, putative transcriptional activator. Controls tissue-specific synthesis of anthocyanin pigments in various parts of the maize plant. In Zea mays (Maize), this protein is Anthocyanin regulatory Lc protein (LC).